Here is a 316-residue protein sequence, read N- to C-terminus: 4-hydroxy-3-methylbut-2-enyl diphosphate reductase (316 aa).

Cys12 contacts [4Fe-4S] cluster. Residues His41 and His74 each coordinate (2E)-4-hydroxy-3-methylbut-2-enyl diphosphate. Dimethylallyl diphosphate-binding residues include His41 and His74. Residues His41 and His74 each contribute to the isopentenyl diphosphate site. Cys96 provides a ligand contact to [4Fe-4S] cluster. His124 is a binding site for (2E)-4-hydroxy-3-methylbut-2-enyl diphosphate. His124 is a binding site for dimethylallyl diphosphate. His124 is an isopentenyl diphosphate binding site. Glu126 functions as the Proton donor in the catalytic mechanism. Thr169 serves as a coordination point for (2E)-4-hydroxy-3-methylbut-2-enyl diphosphate. Position 199 (Cys199) interacts with [4Fe-4S] cluster. 4 residues coordinate (2E)-4-hydroxy-3-methylbut-2-enyl diphosphate: Ser227, Ser228, Asn229, and Ser271. Residues Ser227, Ser228, Asn229, and Ser271 each contribute to the dimethylallyl diphosphate site. The isopentenyl diphosphate site is built by Ser227, Ser228, Asn229, and Ser271.

The protein belongs to the IspH family. [4Fe-4S] cluster is required as a cofactor.

The catalysed reaction is isopentenyl diphosphate + 2 oxidized [2Fe-2S]-[ferredoxin] + H2O = (2E)-4-hydroxy-3-methylbut-2-enyl diphosphate + 2 reduced [2Fe-2S]-[ferredoxin] + 2 H(+). The enzyme catalyses dimethylallyl diphosphate + 2 oxidized [2Fe-2S]-[ferredoxin] + H2O = (2E)-4-hydroxy-3-methylbut-2-enyl diphosphate + 2 reduced [2Fe-2S]-[ferredoxin] + 2 H(+). It participates in isoprenoid biosynthesis; dimethylallyl diphosphate biosynthesis; dimethylallyl diphosphate from (2E)-4-hydroxy-3-methylbutenyl diphosphate: step 1/1. Its pathway is isoprenoid biosynthesis; isopentenyl diphosphate biosynthesis via DXP pathway; isopentenyl diphosphate from 1-deoxy-D-xylulose 5-phosphate: step 6/6. Functionally, catalyzes the conversion of 1-hydroxy-2-methyl-2-(E)-butenyl 4-diphosphate (HMBPP) into a mixture of isopentenyl diphosphate (IPP) and dimethylallyl diphosphate (DMAPP). Acts in the terminal step of the DOXP/MEP pathway for isoprenoid precursor biosynthesis. The polypeptide is 4-hydroxy-3-methylbut-2-enyl diphosphate reductase (Xanthomonas campestris pv. campestris (strain 8004)).